The sequence spans 311 residues: MNKNPFIVCLMGPTASGKTDLAIALARKLPFEIISVDSAMVYRGLDIGTAKPNEEELQLTSHRLINICDPSFPYSAGQFYKDALSEIKTIEIRNRTPLLVGGTMLYFHILEQGFSDLPTADETVRKKIQEEAAQHGWAKIHERLNAIDPKSAARINPNDAQRIQRAFEVYETTGQPLSSYQSLKRFKALPYQFINLILAPENRSWLHQRIEKRFDQMLKNNFLEEVRQLYNRGDLNSDLPAIRTVGYRQVWKYLSGEYDYETMRHKAIAATRQLAKRQLTWLRRWPDAKWFNSEDKDLISQVVDYLKGIGM.

12–19 (GPTASGKT) lines the ATP pocket. Position 14-19 (14-19 (TASGKT)) interacts with substrate. 2 interaction with substrate tRNA regions span residues 37–40 (DSAM) and 161–165 (QRIQR).

The protein belongs to the IPP transferase family. As to quaternary structure, monomer. It depends on Mg(2+) as a cofactor.

The catalysed reaction is adenosine(37) in tRNA + dimethylallyl diphosphate = N(6)-dimethylallyladenosine(37) in tRNA + diphosphate. Its function is as follows. Catalyzes the transfer of a dimethylallyl group onto the adenine at position 37 in tRNAs that read codons beginning with uridine, leading to the formation of N6-(dimethylallyl)adenosine (i(6)A). In Coxiella burnetii (strain Dugway 5J108-111), this protein is tRNA dimethylallyltransferase.